Consider the following 252-residue polypeptide: Redox-sensing transcriptional repressor Rex (252 aa).

The H-T-H motif DNA-binding region spans 26–65 (LYLRALTALSERSVPTVSSEELAAAAGVNSAKLRKDFSYL). NAD(+) is bound at residue 100–105 (GIGNLG). Residues 222 to 252 (EAAAEGAIPAAASKESADKGPDGDVPAVMPA) are disordered.

The protein belongs to the transcriptional regulatory Rex family. In terms of assembly, homodimer.

It is found in the cytoplasm. Functionally, modulates transcription in response to changes in cellular NADH/NAD(+) redox state. The protein is Redox-sensing transcriptional repressor Rex of Streptomyces avermitilis (strain ATCC 31267 / DSM 46492 / JCM 5070 / NBRC 14893 / NCIMB 12804 / NRRL 8165 / MA-4680).